A 188-amino-acid polypeptide reads, in one-letter code: Elongation factor P (188 aa).

It belongs to the elongation factor P family.

It localises to the cytoplasm. The protein operates within protein biosynthesis; polypeptide chain elongation. Involved in peptide bond synthesis. Stimulates efficient translation and peptide-bond synthesis on native or reconstituted 70S ribosomes in vitro. Probably functions indirectly by altering the affinity of the ribosome for aminoacyl-tRNA, thus increasing their reactivity as acceptors for peptidyl transferase. This chain is Elongation factor P, found in Paramagnetospirillum magneticum (strain ATCC 700264 / AMB-1) (Magnetospirillum magneticum).